The primary structure comprises 62 residues: DNA gyrase inhibitor YacG (62 aa).

Zn(2+) contacts are provided by Cys-8, Cys-11, Cys-27, and Cys-31.

Belongs to the DNA gyrase inhibitor YacG family. As to quaternary structure, interacts with GyrB. Zn(2+) serves as cofactor.

Its function is as follows. Inhibits all the catalytic activities of DNA gyrase by preventing its interaction with DNA. Acts by binding directly to the C-terminal domain of GyrB, which probably disrupts DNA binding by the gyrase. In Actinobacillus pleuropneumoniae serotype 5b (strain L20), this protein is DNA gyrase inhibitor YacG.